A 305-amino-acid chain; its full sequence is Dihydroorotate dehydrogenase B (NAD(+)), catalytic subunit (305 aa).

Residues serine 23 and 47-48 (KG) each bind FMN. Substrate contacts are provided by residues lysine 47 and 71 to 75 (NAIGL). Residues asparagine 101 and asparagine 129 each contribute to the FMN site. Position 129 (asparagine 129) interacts with substrate. Catalysis depends on cysteine 132, which acts as the Nucleophile. 2 residues coordinate FMN: lysine 167 and isoleucine 193. Substrate is bound at residue 194 to 195 (NT). FMN contacts are provided by residues glycine 219, 245-246 (GG), and 267-268 (GT).

Belongs to the dihydroorotate dehydrogenase family. Type 1 subfamily. Heterotetramer of 2 PyrK and 2 PyrD type B subunits. It depends on FMN as a cofactor.

The protein resides in the cytoplasm. It carries out the reaction (S)-dihydroorotate + NAD(+) = orotate + NADH + H(+). Its pathway is pyrimidine metabolism; UMP biosynthesis via de novo pathway; orotate from (S)-dihydroorotate (NAD(+) route): step 1/1. Its function is as follows. Catalyzes the conversion of dihydroorotate to orotate with NAD(+) as electron acceptor. This chain is Dihydroorotate dehydrogenase B (NAD(+)), catalytic subunit (pyrD), found in Geobacter metallireducens (strain ATCC 53774 / DSM 7210 / GS-15).